Consider the following 342-residue polypeptide: MNHSLKPWNTFGIDHNAQHIVCAEDEQQLLNAWQYATAEGQPVLILGEGSNVLFLEDYRGTVIINRIKGIEIHDEPDAWYLHVGAGENWHRLVKYTLQEGMPGLENLALIPGCVGSSPIQNIGAYGVELQRVCAYVDSVELATGKQVRLTAKECRFGYRDSIFKHEYQDRFAIVAVGLRLPKEWQPVLTYGDLTRLDPTTVTPQQVFNAVCHMRTTKLPDPKVNGNAGSFFKNPVVSAETAKALLSQFPTAPNYPQADGSVKLAAGWLIDQCQLKGMQIGGAAVHRQQALVLINEDNAKSEDVVQLAHHVRQKVGEKFNVWLEPEVRFIGASGEVSAVETIS.

In terms of domain architecture, FAD-binding PCMH-type spans isoleucine 13–glutamate 183. The active site involves arginine 159. Tyrosine 190 lines the substrate pocket. Residue serine 229 is the Proton donor of the active site. The active site involves glutamate 325.

Belongs to the MurB family. In terms of assembly, monomer. FAD serves as cofactor.

The protein resides in the cytoplasm. The catalysed reaction is UDP-N-acetyl-alpha-D-muramate + NADP(+) = UDP-N-acetyl-3-O-(1-carboxyvinyl)-alpha-D-glucosamine + NADPH + H(+). It functions in the pathway cell wall biogenesis; peptidoglycan biosynthesis. Cell wall formation. This chain is UDP-N-acetylenolpyruvoylglucosamine reductase (murB), found in Escherichia coli (strain K12).